A 331-amino-acid chain; its full sequence is Phosphoribosylformylglycinamidine cyclo-ligase (331 aa).

It belongs to the AIR synthase family.

It is found in the cytoplasm. It catalyses the reaction 2-formamido-N(1)-(5-O-phospho-beta-D-ribosyl)acetamidine + ATP = 5-amino-1-(5-phospho-beta-D-ribosyl)imidazole + ADP + phosphate + H(+). It functions in the pathway purine metabolism; IMP biosynthesis via de novo pathway; 5-amino-1-(5-phospho-D-ribosyl)imidazole from N(2)-formyl-N(1)-(5-phospho-D-ribosyl)glycinamide: step 2/2. This Clostridium botulinum (strain Okra / Type B1) protein is Phosphoribosylformylglycinamidine cyclo-ligase.